The following is a 341-amino-acid chain: Hygromycin-B 4-O-kinase (341 aa).

The active-site Proton acceptor is aspartate 198.

Belongs to the aminoglycoside phosphotransferase family.

It carries out the reaction hygromycin B + ATP = 4-O-phosphohygromycin B + ADP + H(+). Its function is as follows. The aminoglycoside phosphotransferases achieve inactivation of their antibiotic substrates by phosphorylation. Only phosphorylates hygromycin and closely related compounds such as demethyl analogs and destomycin. The sequence is that of Hygromycin-B 4-O-kinase (hph) from Escherichia coli.